The chain runs to 511 residues: uncharacterized protein (511 aa).

The LisH domain occupies 13-45; sequence IYDALNMLVYDYLLKMKYEGSAKIFFNEAGLEN. The tract at residues 172 to 212 is disordered; it reads PRFEEQGVPPAKMAPKQFRDEGRSGNVESPSIATNQEGSSP. Over residues 197 to 210 the composition is skewed to polar residues; sequence NVESPSIATNQEGS.

This is an uncharacterized protein from Encephalitozoon cuniculi (strain GB-M1) (Microsporidian parasite).